A 218-amino-acid polypeptide reads, in one-letter code: Octanoyltransferase (218 aa).

Residues 32 to 214 (VLTADEIWLV…HFTQLLGYND (183 aa)) enclose the BPL/LPL catalytic domain. Residues 71–78 (RGGQITYH), 143–145 (SLG), and 156–158 (GLA) each bind substrate. The Acyl-thioester intermediate role is filled by Cys-174.

This sequence belongs to the LipB family.

The protein resides in the cytoplasm. The catalysed reaction is octanoyl-[ACP] + L-lysyl-[protein] = N(6)-octanoyl-L-lysyl-[protein] + holo-[ACP] + H(+). It participates in protein modification; protein lipoylation via endogenous pathway; protein N(6)-(lipoyl)lysine from octanoyl-[acyl-carrier-protein]: step 1/2. In terms of biological role, catalyzes the transfer of endogenously produced octanoic acid from octanoyl-acyl-carrier-protein onto the lipoyl domains of lipoate-dependent enzymes. Lipoyl-ACP can also act as a substrate although octanoyl-ACP is likely to be the physiological substrate. This is Octanoyltransferase from Histophilus somni (strain 2336) (Haemophilus somnus).